A 176-amino-acid polypeptide reads, in one-letter code: MVSQVRQNYHSDCEAAVNRMLNLELYASYTYSSMYAFFDRDDVALHNVAEFFKEHSHEEREHAEKFMKYQNKRGGRVVLQDIKKPERDEWGNTLEAMQAALQLEKTVNQALLDLHKLATDKVDPHLCDFLESEYLEEQVKDIKRIGDFITNLKRLGLPENGMGEYLFDKHSVKESS.

Residues 7 to 156 (QNYHSDCEAA…DFITNLKRLG (150 aa)) enclose the Ferritin-like diiron domain. Fe cation is bound by residues E24, E59, H62, E104, Q138, and D141.

This sequence belongs to the ferritin family. In terms of assembly, oligomer of 24 subunits. The functional molecule is roughly spherical and contains a central cavity into which the polymeric mineral iron core is deposited.

The enzyme catalyses 4 Fe(2+) + O2 + 4 H(+) = 4 Fe(3+) + 2 H2O. Its function is as follows. Stores iron in a soluble, non-toxic, readily available form. Important for iron homeostasis. Has ferroxidase activity. Iron is taken up in the ferrous form and deposited as ferric hydroxides after oxidation. The polypeptide is Ferritin, middle subunit (Aquarana catesbeiana (American bullfrog)).